Consider the following 457-residue polypeptide: Argininosuccinate lyase (457 aa).

The protein belongs to the lyase 1 family. Argininosuccinate lyase subfamily.

The protein resides in the cytoplasm. It carries out the reaction 2-(N(omega)-L-arginino)succinate = fumarate + L-arginine. The protein operates within amino-acid biosynthesis; L-arginine biosynthesis; L-arginine from L-ornithine and carbamoyl phosphate: step 3/3. This Pectobacterium carotovorum subsp. carotovorum (strain PC1) protein is Argininosuccinate lyase.